Consider the following 221-residue polypeptide: Type II secretion system protein J (221 aa).

The propeptide at M1–G15 is leader sequence. At F16 the chain carries N-methylphenylalanine. The helical transmembrane segment at F16–Y36 threads the bilayer.

Belongs to the GSP J family. In terms of assembly, type II secretion is composed of four main components: the outer membrane complex, the inner membrane complex, the cytoplasmic secretion ATPase and the periplasm-spanning pseudopilus. Interacts with core component epsG. In terms of processing, cleaved by prepilin peptidase. Methylated by prepilin peptidase at the amino group of the N-terminal phenylalanine once the leader sequence is cleaved by prepilin peptidase.

It localises to the cell inner membrane. Component of the type II secretion system required for the energy-dependent secretion of extracellular factors such as proteases and toxins from the periplasm. Part of the pseudopilus tip complex that is critical for the recognition and binding of secretion substrates. This is Type II secretion system protein J (epsJ) from Vibrio cholerae serotype O1 (strain ATCC 39315 / El Tor Inaba N16961).